Here is a 385-residue protein sequence, read N- to C-terminus: 1-deoxy-D-xylulose 5-phosphate reductoisomerase (385 aa).

Positions 10, 11, 12, 13, 37, and 124 each coordinate NADPH. Lysine 125 is a binding site for 1-deoxy-D-xylulose 5-phosphate. NADPH is bound at residue glutamate 126. Position 150 (aspartate 150) interacts with Mn(2+). 1-deoxy-D-xylulose 5-phosphate-binding residues include serine 151, glutamate 152, serine 176, and histidine 199. Glutamate 152 contributes to the Mn(2+) binding site. Position 205 (glycine 205) interacts with NADPH. 1-deoxy-D-xylulose 5-phosphate-binding residues include serine 212, asparagine 217, lysine 218, and glutamate 221. Residue glutamate 221 participates in Mn(2+) binding.

This sequence belongs to the DXR family. Mg(2+) serves as cofactor. It depends on Mn(2+) as a cofactor.

It catalyses the reaction 2-C-methyl-D-erythritol 4-phosphate + NADP(+) = 1-deoxy-D-xylulose 5-phosphate + NADPH + H(+). It participates in isoprenoid biosynthesis; isopentenyl diphosphate biosynthesis via DXP pathway; isopentenyl diphosphate from 1-deoxy-D-xylulose 5-phosphate: step 1/6. Its function is as follows. Catalyzes the NADPH-dependent rearrangement and reduction of 1-deoxy-D-xylulose-5-phosphate (DXP) to 2-C-methyl-D-erythritol 4-phosphate (MEP). This chain is 1-deoxy-D-xylulose 5-phosphate reductoisomerase, found in Clostridium botulinum (strain Langeland / NCTC 10281 / Type F).